Consider the following 1145-residue polypeptide: Protein STU1 (1145 aa).

HEAT repeat units follow at residues 96–134 and 168–206; these read TLPL…EKYV and YVPV…KSDL. 3 disordered regions span residues 226–271, 510–793, and 816–839; these read ELIP…GIDT, LLNK…VVDP, and PEPV…PAAS. Residues 229–239 are compositionally biased toward low complexity; sequence PTSSRPETPAA. The segment covering 535–545 has biased composition (polar residues); the sequence is SKSTMGTSKPS. 3 stretches are compositionally biased toward low complexity: residues 580-594, 663-676, and 696-708; these read TTTT…SGAR, ASHA…SPSS, and QSQS…SSPS.

This sequence belongs to the CLASP family. Interacts with microtubules.

The protein localises to the cytoplasm. Its subcellular location is the cytoskeleton. The protein resides in the nucleus. It is found in the spindle. In terms of biological role, microtubule binding protein that promotes the stabilization of dynamic microtubules. Required for mitotic spindle formation. The protein is Protein STU1 (STU1) of Gibberella zeae (strain ATCC MYA-4620 / CBS 123657 / FGSC 9075 / NRRL 31084 / PH-1) (Wheat head blight fungus).